The sequence spans 399 residues: Argininosuccinate synthase (399 aa).

ATP is bound at residue 9-17; the sequence is AYSGGLDTS. Residue Tyr88 coordinates L-citrulline. Gly118 lines the ATP pocket. Positions 120, 124, and 125 each coordinate L-aspartate. Residue Asn124 participates in L-citrulline binding. Positions 128, 176, 261, and 273 each coordinate L-citrulline.

This sequence belongs to the argininosuccinate synthase family. Type 1 subfamily. Homotetramer.

The protein resides in the cytoplasm. The catalysed reaction is L-citrulline + L-aspartate + ATP = 2-(N(omega)-L-arginino)succinate + AMP + diphosphate + H(+). It functions in the pathway amino-acid biosynthesis; L-arginine biosynthesis; L-arginine from L-ornithine and carbamoyl phosphate: step 2/3. The chain is Argininosuccinate synthase from Mycobacterium leprae (strain TN).